We begin with the raw amino-acid sequence, 348 residues long: UDP-3-O-acylglucosamine N-acyltransferase (348 aa).

The active-site Proton acceptor is histidine 241.

This sequence belongs to the transferase hexapeptide repeat family. LpxD subfamily. As to quaternary structure, homotrimer.

The catalysed reaction is a UDP-3-O-[(3R)-3-hydroxyacyl]-alpha-D-glucosamine + a (3R)-hydroxyacyl-[ACP] = a UDP-2-N,3-O-bis[(3R)-3-hydroxyacyl]-alpha-D-glucosamine + holo-[ACP] + H(+). It functions in the pathway bacterial outer membrane biogenesis; LPS lipid A biosynthesis. In terms of biological role, catalyzes the N-acylation of UDP-3-O-acylglucosamine using 3-hydroxyacyl-ACP as the acyl donor. Is involved in the biosynthesis of lipid A, a phosphorylated glycolipid that anchors the lipopolysaccharide to the outer membrane of the cell. The polypeptide is UDP-3-O-acylglucosamine N-acyltransferase (Neisseria meningitidis serogroup B (strain ATCC BAA-335 / MC58)).